Consider the following 446-residue polypeptide: Chromosomal replication initiator protein DnaA (446 aa).

Residues 1–81 (MENIADLWNS…AKLNIRFIIP (81 aa)) are domain I, interacts with DnaA modulators. The segment at 81–109 (PQSQTEEEVDYPPAKAKKMNDESNHLPQS) is domain II. The tract at residues 110-326 (MLNPKYTFDT…GALIRVVAYS (217 aa)) is domain III, AAA+ region. ATP-binding residues include glycine 154, glycine 156, lysine 157, and threonine 158. Positions 327–446 (SLINKDINAD…QIEEINDILK (120 aa)) are domain IV, binds dsDNA.

The protein belongs to the DnaA family. In terms of assembly, oligomerizes as a right-handed, spiral filament on DNA at oriC.

It is found in the cytoplasm. Functionally, plays an essential role in the initiation and regulation of chromosomal replication. ATP-DnaA binds to the origin of replication (oriC) to initiate formation of the DNA replication initiation complex once per cell cycle. Binds the DnaA box (a 9 base pair repeat at the origin) and separates the double-stranded (ds)DNA. Forms a right-handed helical filament on oriC DNA; dsDNA binds to the exterior of the filament while single-stranded (ss)DNA is stabiized in the filament's interior. The ATP-DnaA-oriC complex binds and stabilizes one strand of the AT-rich DNA unwinding element (DUE), permitting loading of DNA polymerase. After initiation quickly degrades to an ADP-DnaA complex that is not apt for DNA replication. Binds acidic phospholipids. The polypeptide is Chromosomal replication initiator protein DnaA (Bacillus cytotoxicus (strain DSM 22905 / CIP 110041 / 391-98 / NVH 391-98)).